The sequence spans 254 residues: Demethylmenaquinone methyltransferase (254 aa).

Residues T62, D80, D122–G123, and S139 each bind S-adenosyl-L-methionine.

The protein belongs to the class I-like SAM-binding methyltransferase superfamily. MenG/UbiE family.

It catalyses the reaction a 2-demethylmenaquinol + S-adenosyl-L-methionine = a menaquinol + S-adenosyl-L-homocysteine + H(+). The protein operates within quinol/quinone metabolism; menaquinone biosynthesis; menaquinol from 1,4-dihydroxy-2-naphthoate: step 2/2. Its function is as follows. Methyltransferase required for the conversion of demethylmenaquinol (DMKH2) to menaquinol (MKH2). This chain is Demethylmenaquinone methyltransferase, found in Parafrankia sp. (strain EAN1pec).